The chain runs to 321 residues: Glucokinase (321 aa).

Residue 8 to 13 (GDVGGT) participates in ATP binding.

It belongs to the bacterial glucokinase family.

Its subcellular location is the cytoplasm. The catalysed reaction is D-glucose + ATP = D-glucose 6-phosphate + ADP + H(+). The sequence is that of Glucokinase from Salmonella arizonae (strain ATCC BAA-731 / CDC346-86 / RSK2980).